Consider the following 246-residue polypeptide: UDP-N-acetyl-D-mannosaminuronic acid transferase (246 aa).

It belongs to the glycosyltransferase 26 family.

The catalysed reaction is UDP-N-acetyl-alpha-D-mannosaminouronate + N-acetyl-alpha-D-glucosaminyl-di-trans,octa-cis-undecaprenyl diphosphate = beta-D-ManNAcA-(1-&gt;4)-alpha-D-GlcNAc-di-trans,octa-cis-undecaprenyl diphosphate + UDP + H(+). The protein operates within bacterial outer membrane biogenesis; enterobacterial common antigen biosynthesis. In terms of biological role, catalyzes the synthesis of Und-PP-GlcNAc-ManNAcA (Lipid II), the second lipid-linked intermediate involved in enterobacterial common antigen (ECA) synthesis. This chain is UDP-N-acetyl-D-mannosaminuronic acid transferase, found in Salmonella agona (strain SL483).